A 479-amino-acid chain; its full sequence is Variant surface glycoprotein ILTAT 1.22 (479 aa).

Residues 1–12 form the signal peptide; the sequence is MDTAQVFALFYM. N-linked (GlcNAc...) asparagine glycosylation is found at asparagine 120 and asparagine 458. Asparagine 462 carries GPI-anchor amidated asparagine lipidation. Residues 463-479 constitute a propeptide, removed in mature form; sequence NSFAIKTSTLLLAVLLF.

It localises to the cell membrane. In terms of biological role, VSG forms a coat on the surface of the parasite. The trypanosome evades the immune response of the host by expressing a series of antigenically distinct VSGs from an estimated 1000 VSG genes. The chain is Variant surface glycoprotein ILTAT 1.22 from Trypanosoma brucei brucei.